The following is a 307-amino-acid chain: Myeloid-associated differentiation marker-like protein 2 (307 aa).

MARVEL domains lie at 17 to 154 (AVTS…ARPG) and 159 to 303 (YMAT…RIRF). 7 helical membrane passes run 53–73 (FCMA…ACEF), 90–110 (AFAM…PLYF), 129–149 (LAAS…VALT), 163–183 (VSGL…GALV), 198–218 (VAVY…SVMG), 232–252 (VVYT…WPVF), and 278–298 (LVVA…LAYS).

This sequence belongs to the MAL family.

Its subcellular location is the membrane. The polypeptide is Myeloid-associated differentiation marker-like protein 2 (Myadml2) (Rattus norvegicus (Rat)).